Here is an 89-residue protein sequence, read N- to C-terminus: Elongation factor 1-beta (89 aa).

This sequence belongs to the EF-1-beta/EF-1-delta family.

In terms of biological role, promotes the exchange of GDP for GTP in EF-1-alpha/GDP, thus allowing the regeneration of EF-1-alpha/GTP that could then be used to form the ternary complex EF-1-alpha/GTP/AAtRNA. This is Elongation factor 1-beta from Methanosarcina barkeri (strain Fusaro / DSM 804).